Reading from the N-terminus, the 299-residue chain is S-methyl-5'-thioadenosine phosphorylase (299 aa).

Phosphate contacts are provided by residues Ser14, 56-57 (RH), and 89-90 (SA). Met191 serves as a coordination point for substrate. Thr192 provides a ligand contact to phosphate. 215–217 (DYD) contacts substrate.

It belongs to the PNP/MTAP phosphorylase family. MTAP subfamily. Homohexamer. Dimer of a homotrimer.

It carries out the reaction S-methyl-5'-thioadenosine + phosphate = 5-(methylsulfanyl)-alpha-D-ribose 1-phosphate + adenine. It participates in amino-acid biosynthesis; L-methionine biosynthesis via salvage pathway; S-methyl-5-thio-alpha-D-ribose 1-phosphate from S-methyl-5'-thioadenosine (phosphorylase route): step 1/1. In terms of biological role, catalyzes the reversible phosphorylation of S-methyl-5'-thioadenosine (MTA) to adenine and 5-methylthioribose-1-phosphate. Involved in the breakdown of MTA, a major by-product of polyamine biosynthesis. Responsible for the first step in the methionine salvage pathway after MTA has been generated from S-adenosylmethionine. Has broad substrate specificity with 6-aminopurine nucleosides as preferred substrates. In Gloeobacter violaceus (strain ATCC 29082 / PCC 7421), this protein is S-methyl-5'-thioadenosine phosphorylase.